Reading from the N-terminus, the 284-residue chain is Release factor glutamine methyltransferase (284 aa).

Residues 123–127, aspartate 146, tryptophan 174, and asparagine 189 each bind S-adenosyl-L-methionine; that span reads GTGTG. 189–192 is a binding site for substrate; that stretch reads NPPY.

The protein belongs to the protein N5-glutamine methyltransferase family. PrmC subfamily.

It carries out the reaction L-glutaminyl-[peptide chain release factor] + S-adenosyl-L-methionine = N(5)-methyl-L-glutaminyl-[peptide chain release factor] + S-adenosyl-L-homocysteine + H(+). Methylates the class 1 translation termination release factors RF1/PrfA and RF2/PrfB on the glutamine residue of the universally conserved GGQ motif. In Francisella tularensis subsp. tularensis (strain SCHU S4 / Schu 4), this protein is Release factor glutamine methyltransferase.